We begin with the raw amino-acid sequence, 59 residues long: Protein QUA-QUINE STARCH (59 aa).

Expressed in hypocotyls, leaves, vasculature, hydathodes, trichomes, pedicels, sepals, filaments, mature pollen, stigma papillae, styles, siliques, root and shoot tips, but not in shoot meristem, petals or root epidermis.

It localises to the cytoplasm. Functionally, involved in regulating carbon and nitrogen allocation to starch and protein. This is Protein QUA-QUINE STARCH from Arabidopsis thaliana (Mouse-ear cress).